The chain runs to 173 residues: Protein Rv3753c (173 aa).

The chain is Protein Rv3753c from Mycobacterium tuberculosis (strain ATCC 25618 / H37Rv).